The chain runs to 607 residues: Albumin B (607 aa).

The first 18 residues, 1-18 (MKWITLICLLISSSFIES), serve as a signal peptide directing secretion. Positions 19-24 (RILFKR) are excised as a propeptide. Albumin domains follow at residues 22 to 209 (FKRD…KQLM), 210 to 402 (KQSH…RFMN), and 403 to 600 (EAKE…VLIE). His30 contacts Cu cation. 17 disulfides stabilise this stretch: Cys80–Cys88, Cys101–Cys117, Cys116–Cys127, Cys147–Cys192, Cys191–Cys200, Cys223–Cys269, Cys268–Cys276, Cys288–Cys302, Cys301–Cys312, Cys339–Cys384, Cys383–Cys392, Cys415–Cys461, Cys460–Cys471, Cys484–Cys500, Cys499–Cys510, Cys537–Cys582, and Cys581–Cys590.

This sequence belongs to the ALB/AFP/VDB family. As to expression, plasma.

The protein resides in the secreted. Serum albumin, the main protein of plasma, has a good binding capacity for water, Ca(2+), Na(+), K(+), fatty acids, hormones, bilirubin and drugs. Its main function is the regulation of the colloidal osmotic pressure of blood. This is Albumin B (alb-b) from Xenopus laevis (African clawed frog).